Consider the following 138-residue polypeptide: Large ribosomal subunit protein uL16 (138 aa).

Belongs to the universal ribosomal protein uL16 family. Part of the 50S ribosomal subunit.

In terms of biological role, binds 23S rRNA and is also seen to make contacts with the A and possibly P site tRNAs. In Rubrobacter xylanophilus (strain DSM 9941 / JCM 11954 / NBRC 16129 / PRD-1), this protein is Large ribosomal subunit protein uL16.